Reading from the N-terminus, the 222-residue chain is Prolactin-3B1 (222 aa).

An N-terminal signal peptide occupies residues 1–31 (MKLSLSQPCSFSGALLLLAVSNLLVWEKVTS). Cystine bridges form between Cys-82–Cys-197 and Cys-214–Cys-222.

It belongs to the somatotropin/prolactin family.

The protein localises to the secreted. The polypeptide is Prolactin-3B1 (Prl3b1) (Mus musculus (Mouse)).